The following is a 173-amino-acid chain: C-phycocyanin beta subunit (173 aa).

N4-methylasparagine is present on Asn-73. (2R,3E)-phycocyanobilin is bound by residues Cys-83 and Cys-154.

This sequence belongs to the phycobiliprotein family. As to quaternary structure, heterodimer of an alpha and a beta subunit, which further assembles into trimers and the trimers into hexamers. Post-translationally, contains two covalently linked bilin chromophores.

The protein localises to the cellular thylakoid membrane. Light-harvesting photosynthetic bile pigment-protein from the phycobiliprotein complex (phycobilisome, PBS). Phycocyanin is the major phycobiliprotein in the PBS rod. The sequence is that of C-phycocyanin beta subunit (cpcB1) from Synechococcus elongatus (strain ATCC 33912 / PCC 7942 / FACHB-805) (Anacystis nidulans R2).